The sequence spans 564 residues: Dihydropyrimidinase-related protein 5 (564 aa).

Phosphothreonine is present on residues Thr-509 and Thr-514. A phosphoserine mark is found at Ser-532 and Ser-538. Arg-559 is subject to Omega-N-methylarginine.

It belongs to the metallo-dependent hydrolases superfamily. Hydantoinase/dihydropyrimidinase family. Homotetramer, and heterotetramer with other DPYS-like proteins. Interacts with DPYSL2, DPYSL3 and DPYSL4. Interacts with SEPTIN4 isoform 4. Interacts with MAP2 and TUBB3. Detected in brain.

It localises to the cytoplasm. Involved in the negative regulation of dendrite outgrowth. This chain is Dihydropyrimidinase-related protein 5 (Dpysl5), found in Mus musculus (Mouse).